A 370-amino-acid polypeptide reads, in one-letter code: Versatile peroxidase VPS1 (370 aa).

A signal peptide spans 1–20; that stretch reads MAFAKLSAFVLALGATVALG. Positions 21-31 are excised as a propeptide; the sequence is ESPTHRCLNKR. 4 disulfide bridges follow: cysteine 34–cysteine 46, cysteine 45–cysteine 315, cysteine 65–cysteine 151, and cysteine 279–cysteine 344. The Mn(2+) site is built by glutamate 67 and glutamate 71. Catalysis depends on histidine 78, which acts as the Proton acceptor. Ca(2+)-binding residues include aspartate 79, glycine 97, aspartate 99, and serine 101. Asparagine 133 carries N-linked (GlcNAc...) asparagine glycosylation. Tryptophan 201 functions as the Tryptophan radical intermediate in the catalytic mechanism. Histidine 206 lines the heme b pocket. Ca(2+) is bound at residue threonine 207. Residue 210-214 participates in heme b binding; the sequence is AADHV. A Mn(2+)-binding site is contributed by aspartate 212. Ca(2+) contacts are provided by aspartate 224, threonine 226, threonine 229, and aspartate 231.

The protein belongs to the peroxidase family. Ligninase subfamily. Heme b serves as cofactor. Requires Ca(2+) as cofactor.

It localises to the secreted. It carries out the reaction 1-(4-hydroxy-3-methoxyphenyl)-2-(2-methoxyphenoxy)propane-1,3-diol + H2O2 = guaiacol + vanillin + glycolaldehyde + H2O. The catalysed reaction is 2 Mn(2+) + H2O2 + 2 H(+) = 2 Mn(3+) + 2 H2O. In terms of biological role, a versatile ligninolytic peroxidase that combines the substrate specificity characteristics of the two other ligninolytic peroxidases, manganese peroxidase and lignin peroxidase. The polypeptide is Versatile peroxidase VPS1 (vps1) (Pleurotus eryngii (Boletus of the steppes)).